A 782-amino-acid polypeptide reads, in one-letter code: DNA repair and recombination protein RAD54-like (782 aa).

Positions 1 to 20 are enriched in polar residues; that stretch reads MRRSLAPSQRGGQRLSSRND. The interval 1–28 is disordered; that stretch reads MRRSLAPSQRGGQRLSSRNDFTPPLLKK. The required for chromatin remodeling, strand pairing activities and coupling of ATPase activity stretch occupies residues 2–9; it reads RRSLAPSQ. Phosphothreonine is present on Thr22. The region spanning 168–343 is the Helicase ATP-binding domain; sequence EGKRGNFNGC…FSLVNFVNPE (176 aa). 181-188 is an ATP binding site; it reads DEMGLGKT. The short motif at 294–297 is the DEGH box element; it reads DEGH. The 158-residue stretch at 501 to 658 folds into the Helicase C-terminal domain; that stretch reads LLDFMLAAIR…NNESAEKHFT (158 aa). The segment covering 741–753 has biased composition (polar residues); it reads SQKIETTPATETS. Residues 741–782 are disordered; sequence SQKIETTPATETSVEAKPEPERRKRPAMPLSDDSADEDFQGF. A compositionally biased stretch (acidic residues) spans 773-782; sequence DSADEDFQGF.

Belongs to the SNF2/RAD54 helicase family. Interacts (via N-terminus) with spn-A/Rad51.

It localises to the nucleus. Involved in mitotic DNA repair and meiotic recombination. Functions in the recombinational DNA repair pathway. Essential for interhomolog gene conversion (GC), but may have a less important role in intersister GC than spn-A/Rad51. In the presence of DNA, spn-A/Rad51 enhances the ATPase activity of okr/Rad54. This Drosophila pseudoobscura pseudoobscura (Fruit fly) protein is DNA repair and recombination protein RAD54-like.